The sequence spans 352 residues: tRNA-specific 2-thiouridylase MnmA (352 aa).

ATP contacts are provided by residues alanine 11 to serine 18 and methionine 37. Residue cysteine 101 is the Nucleophile of the active site. An intrachain disulfide couples cysteine 101 to cysteine 197. Position 125 (glycine 125) interacts with ATP. Residues lysine 147 to glutamine 149 form an interaction with tRNA region. The active-site Cysteine persulfide intermediate is cysteine 197. An interaction with tRNA region spans residues arginine 302–tyrosine 303.

Belongs to the MnmA/TRMU family.

Its subcellular location is the cytoplasm. The catalysed reaction is S-sulfanyl-L-cysteinyl-[protein] + uridine(34) in tRNA + AH2 + ATP = 2-thiouridine(34) in tRNA + L-cysteinyl-[protein] + A + AMP + diphosphate + H(+). Catalyzes the 2-thiolation of uridine at the wobble position (U34) of tRNA, leading to the formation of s(2)U34. This Syntrophotalea carbinolica (strain DSM 2380 / NBRC 103641 / GraBd1) (Pelobacter carbinolicus) protein is tRNA-specific 2-thiouridylase MnmA.